Reading from the N-terminus, the 493-residue chain is Acetylcholine receptor subunit beta (493 aa).

Positions 1–24 (MENVRRMALGLVVMMALALSGVGA) are cleaved as a signal peptide. The Extracellular segment spans residues 25 to 240 (SVMEDTLLSV…VTFYLIIQRK (216 aa)). An intrachain disulfide couples Cys152 to Cys166. An N-linked (GlcNAc...) asparagine glycan is attached at Asn165. Transmembrane regions (helical) follow at residues 241–265 (PLFYIVYTIIPCILISILAILVFYL), 273–291 (MSLSISALLAVTVFLLLLA), and 307–328 (YLMFIMILVAFSVILSVVVLNL). The Cytoplasmic portion of the chain corresponds to 329-461 (HHRSPNTHTM…WQYVAMVADR (133 aa)). A Phosphotyrosine; by Tyr-kinases modification is found at Tyr379. The helical transmembrane segment at 462–480 (LFLYVFFVICSIGTFSIFL) threads the bilayer.

The protein belongs to the ligand-gated ion channel (TC 1.A.9) family. Acetylcholine receptor (TC 1.A.9.1) subfamily. Beta-1/CHRNB1 sub-subfamily. In terms of assembly, pentamer of two alpha chains, and one each of the beta, delta, and gamma chains.

It localises to the postsynaptic cell membrane. It is found in the cell membrane. It catalyses the reaction K(+)(in) = K(+)(out). The catalysed reaction is Na(+)(in) = Na(+)(out). Functionally, after binding acetylcholine, the AChR responds by an extensive change in conformation that affects all subunits and leads to opening of an ion-conducting channel across the plasma membrane. This Tetronarce californica (Pacific electric ray) protein is Acetylcholine receptor subunit beta (CHRNB1).